Consider the following 354-residue polypeptide: Sphingosine-1-phosphate phosphatase 2 (354 aa).

The next 4 membrane-spanning stretches (helical) occupy residues 43–63 (YLFRFSAALGQEVFYITFLPF), 76–96 (LVVIWVLVMYIGQVAKDILKW), 115–135 (YGMPSTHAMAATAISFTLLIS), and 140–160 (YQYPFILGLMMAVVFSTLVCL). The segment at 91 to 99 (KDILKWPRP) is phosphatase sequence motif I. Positions 118 to 121 (PSTH) are phosphatase sequence motif II. His121 (proton donor) is an active-site residue. The interval 161–172 (SRLYTGMHTVLD) is phosphatase sequence motif III. Residue His168 is the Nucleophile of the active site. 5 helical membrane passes run 173-193 (ILGGVLITAVLIALTYPAWTL), 202-222 (PLFPVCVIVVPFLLCYNYPVS), 235-255 (IVAAGAGVTLGFWINHFFQLV), 273-293 (TDMLVLGLTKFMVGIMLILLV), and 334-354 (TSVGICATTFVPMLHRFLGLL).

The protein belongs to the type 2 lipid phosphate phosphatase family. In terms of tissue distribution, highly expressed in pancreatic islets. Expressed in lung, small interstince, colon, kideny and brain.

It localises to the endoplasmic reticulum membrane. It carries out the reaction sphinganine 1-phosphate + H2O = sphinganine + phosphate. The enzyme catalyses sphing-4-enine 1-phosphate + H2O = sphing-4-enine + phosphate. The catalysed reaction is (4R)-hydroxysphinganine 1-phosphate + H2O = (4R)-hydroxysphinganine + phosphate. Its function is as follows. Has specific phosphohydrolase activity towards sphingoid base 1-phosphates. Has high phosphohydrolase activity against dihydrosphingosine-1-phosphate and sphingosine-1-phosphate (S1P) in vitro. Sphingosine-1-phosphate phosphatase activity is needed for efficient recycling of sphingosine into the sphingolipid synthesis pathway. May play a role in attenuating intracellular sphingosine 1-phosphate (S1P) signaling. May play a role in pro-inflammatory signaling. Plays a role in the regulation of pancreatic islet beta-cell endoplasmic reticulum stress and proliferation. The polypeptide is Sphingosine-1-phosphate phosphatase 2 (Mus musculus (Mouse)).